The following is a 323-amino-acid chain: Peroxisomal targeting signal 2 receptor (323 aa).

WD repeat units lie at residues 65-96, 109-141, 153-184, 196-227, 240-271, and 284-315; these read DWND…QLWD, EHAQ…KLWD, GHES…RIWD, AHQA…RGWD, GHTY…RFWN, and HHTE…KIYD.

It belongs to the WD repeat peroxin-7 family. Interacts with PEX5; interaction only takes place when PEX7 is associated with cargo proteins. Interacts with VWA8. In terms of tissue distribution, ubiquitous. Highest expression in pancreas, skeletal muscle and heart.

The protein localises to the cytoplasm. Its subcellular location is the cytosol. The protein resides in the peroxisome matrix. Receptor required for the peroxisomal import of proteins containing a C-terminal PTS2-type peroxisomal targeting signal. Specifically binds to cargo proteins containing a PTS2 peroxisomal targeting signal in the cytosol. Cargo protein-binding triggers interaction with PEX5 and formation of a ternary complex composed of PEX5 and PEX7 along with PTS2-containing cargo proteins, which is tranlocated into peroxisomes by passing through the PEX13-PEX14 docking complex. In Homo sapiens (Human), this protein is Peroxisomal targeting signal 2 receptor.